Consider the following 595-residue polypeptide: Adenine deaminase 3 (595 aa).

It belongs to the metallo-dependent hydrolases superfamily. Adenine deaminase family. Mn(2+) is required as a cofactor.

The enzyme catalyses adenine + H2O + H(+) = hypoxanthine + NH4(+). This is Adenine deaminase 3 from Rhizobium meliloti (strain 1021) (Ensifer meliloti).